Consider the following 291-residue polypeptide: Nucleotide-binding protein LGAS_1315 (291 aa).

Residue 13–20 (GMSGAGKT) coordinates ATP. 63–66 (DLRV) contributes to the GTP binding site.

Belongs to the RapZ-like family.

In terms of biological role, displays ATPase and GTPase activities. This Lactobacillus gasseri (strain ATCC 33323 / DSM 20243 / BCRC 14619 / CIP 102991 / JCM 1131 / KCTC 3163 / NCIMB 11718 / NCTC 13722 / AM63) protein is Nucleotide-binding protein LGAS_1315.